The following is a 211-amino-acid chain: MVAPMASKIEVSIVDQNPVVRTGLETLLVRDGRFSVSGIYASGEDLLAALQTKPVEIVIVGWSLPDMTGGDVLTRVRKEKWRTRIIIYTGERSSEVLRTAIKSGAWGFVAKTEEPQVLLEAVVSVARGRLSLPYVDIDLLNHDPLESLTARERELLAALANGWTNLQIAARTGISRNTVKYHLKNLYDKLGVSNRAMAVALHVSINRNEHR.

Residues 10–126 form the Response regulatory domain; that stretch reads EVSIVDQNPV…VLLEAVVSVA (117 aa). A 4-aspartylphosphate modification is found at aspartate 15. The HTH luxR-type domain maps to 141–206; it reads NHDPLESLTA…MAVALHVSIN (66 aa). The segment at residues 165–184 is a DNA-binding region (H-T-H motif); sequence NLQIAARTGISRNTVKYHLK.

In terms of biological role, not known. Could act on the sgaA gene expression. This is Probable transcriptional regulatory protein SgaR (sgaR) from Hyphomicrobium methylovorum.